The chain runs to 484 residues: ATP synthase subunit beta (484 aa).

168-175 contacts ATP; the sequence is GGAGVGKT.

Belongs to the ATPase alpha/beta chains family. In terms of assembly, F-type ATPases have 2 components, CF(1) - the catalytic core - and CF(0) - the membrane proton channel. CF(1) has five subunits: alpha(3), beta(3), gamma(1), delta(1), epsilon(1). CF(0) has three main subunits: a(1), b(2) and c(9-12). The alpha and beta chains form an alternating ring which encloses part of the gamma chain. CF(1) is attached to CF(0) by a central stalk formed by the gamma and epsilon chains, while a peripheral stalk is formed by the delta and b chains.

The protein localises to the cell membrane. The catalysed reaction is ATP + H2O + 4 H(+)(in) = ADP + phosphate + 5 H(+)(out). Functionally, produces ATP from ADP in the presence of a proton gradient across the membrane. The catalytic sites are hosted primarily by the beta subunits. The polypeptide is ATP synthase subunit beta (Pseudarthrobacter chlorophenolicus (strain ATCC 700700 / DSM 12829 / CIP 107037 / JCM 12360 / KCTC 9906 / NCIMB 13794 / A6) (Arthrobacter chlorophenolicus)).